The chain runs to 532 residues: Fatty-acid amide hydrolase 2 (532 aa).

A helical transmembrane segment spans residues 11–31; it reads LFLLRALGFLIGLVGRAALVL. Residues K131 and S206 each act as charge relay system in the active site. The active-site Acyl-ester intermediate is S230.

Belongs to the amidase family. As to quaternary structure, homodimer. As to expression, expressed in kidney, liver, lung, prostate, heart and ovary.

It is found in the membrane. Its subcellular location is the lipid droplet. The catalysed reaction is N-(5Z,8Z,11Z,14Z-eicosatetraenoyl)-ethanolamine + H2O = ethanolamine + (5Z,8Z,11Z,14Z)-eicosatetraenoate. It carries out the reaction (9Z)-octadecenamide + H2O = (9Z)-octadecenoate + NH4(+). It catalyses the reaction N-(9Z-octadecenoyl) ethanolamine + H2O = ethanolamine + (9Z)-octadecenoate. The enzyme catalyses N-hexadecanoylethanolamine + H2O = ethanolamine + hexadecanoate. Its activity is regulated as follows. Inhibited by O-aryl carbamates and alpha-keto heterocytes. In terms of biological role, catalyzes the hydrolysis of endogenous amidated lipids like the sleep-inducing lipid oleamide ((9Z)-octadecenamide), the endocannabinoid anandamide (N-(5Z,8Z,11Z,14Z-eicosatetraenoyl)-ethanolamine), as well as other fatty amides, to their corresponding fatty acids, thereby regulating the signaling functions of these molecules. Hydrolyzes monounsaturated substrate anandamide preferentially as compared to polyunsaturated substrates. In Homo sapiens (Human), this protein is Fatty-acid amide hydrolase 2 (FAAH2).